We begin with the raw amino-acid sequence, 107 residues long: High mobility group protein HMG-I/HMG-Y (107 aa).

Positions 1 to 107 (MSESSSKSSQ…ISQESSEEEQ (107 aa)) are disordered. Residue Ser2 is modified to N-acetylserine. Position 7 is an N6-acetyllysine (Lys7). The residue at position 8 (Ser8) is an ADP-ribosylserine. At Ser9 the chain carries ADP-ribosylserine; alternate. Phosphoserine; alternate is present on Ser9. Lys15 is subject to N6-acetyllysine; alternate. Lys15 is covalently cross-linked (Glycyl lysine isopeptide (Lys-Gly) (interchain with G-Cter in SUMO2); alternate). Positions 15 to 24 (KQEKDGTEKR) are enriched in basic and acidic residues. Positions 21-31 (TEKRGRGRPRK) form a DNA-binding region, a.T hook 1. Position 26 is an asymmetric dimethylarginine; alternate (Arg26). Arg26 carries the post-translational modification Omega-N-methylarginine; alternate. Arg26 is modified (symmetric dimethylarginine; alternate). Residue Ser36 is modified to Phosphoserine; by HIPK2 and CDC2. A phosphothreonine mark is found at Thr39 and Val42. 2 positions are modified to phosphoserine: Ser44 and Ser49. Thr53 is subject to Phosphothreonine; by HIPK2 and CDC2. Residues 53-63 (TPKRPRGRPKG) constitute a DNA-binding region (a.T hook 2). The segment at 53–77 (TPKRPRGRPKGSKNKGAAKTRKTTT) is interaction with HIPK2. The span at 55-74 (KRPRGRPKGSKNKGAAKTRK) shows a compositional bias: basic residues. Arg58 and Arg60 each carry asymmetric dimethylarginine; by PRMT6; alternate. 2 positions are modified to omega-N-methylarginine; by PRMT6; alternate: Arg58 and Arg60. At Lys67 the chain carries Phosphothreonine. Phosphothreonine; by HIPK2 and CDC2 is present on Thr78. The a.T hook 3 DNA-binding region spans 78–89 (TPGRKPRGRPKK). Residues 93 to 107 (EEEEGISQESSEEEQ) are compositionally biased toward acidic residues. Ser99 carries the post-translational modification Phosphoserine. Residues Ser102 and Ser103 each carry the phosphoserine; by CK modification.

Belongs to the HMGA family. As to quaternary structure, interacts with HIPK2. Post-translationally, constitutively phosphorylated on two or three sites. Hyperphosphorylated at early stages of apoptosis, followed by dephosphorylation and methylation, which coincides with chromatin condensation. Isoforms HMG-I and HMG-Y can be phosphorylated by HIPK2. Phosphorylation of HMG-I at Ser-36, Thr-53 and Thr-78 and of HMG-Y at Thr-42 and Thr-67 by HIPK2 modulates DNA-binding affinity. In terms of processing, HMG-Y is not methylated. Methylation at Arg-58 is mutually exclusive with methylation at Arg-60.

It localises to the nucleus. The protein localises to the chromosome. In terms of biological role, HMG-I/Y bind preferentially to the minor groove of A+T rich regions in double-stranded DNA. It is suggested that these proteins could function in nucleosome phasing and in the 3'-end processing of mRNA transcripts. They are also involved in the transcription regulation of genes containing, or in close proximity to A+T-rich regions. The polypeptide is High mobility group protein HMG-I/HMG-Y (HMGA1) (Homo sapiens (Human)).